Consider the following 368-residue polypeptide: Histidinol-phosphate aminotransferase (368 aa).

Position 228 is an N6-(pyridoxal phosphate)lysine (Lys-228).

The protein belongs to the class-II pyridoxal-phosphate-dependent aminotransferase family. Histidinol-phosphate aminotransferase subfamily. The cofactor is pyridoxal 5'-phosphate.

It catalyses the reaction L-histidinol phosphate + 2-oxoglutarate = 3-(imidazol-4-yl)-2-oxopropyl phosphate + L-glutamate. It functions in the pathway amino-acid biosynthesis; L-histidine biosynthesis; L-histidine from 5-phospho-alpha-D-ribose 1-diphosphate: step 7/9. The chain is Histidinol-phosphate aminotransferase from Methanosarcina mazei (strain ATCC BAA-159 / DSM 3647 / Goe1 / Go1 / JCM 11833 / OCM 88) (Methanosarcina frisia).